Consider the following 203-residue polypeptide: Glutathione S-transferase 2 (203 aa).

Residues 1–78 (MPKVVFHYFG…YLGRKYGLAG (78 aa)) enclose the GST N-terminal domain. Residues Y8, W38, K42, 48–50 (GQM), and 62–63 (QS) contribute to the glutathione site. The GST C-terminal domain occupies 80-203 (DIEEDFEIDQ…YLDSAPKKEF (124 aa)).

It belongs to the GST superfamily. Sigma family. In terms of assembly, homodimer.

The catalysed reaction is RX + glutathione = an S-substituted glutathione + a halide anion + H(+). Conjugation of reduced glutathione to a wide number of exogenous and endogenous hydrophobic electrophiles. The polypeptide is Glutathione S-transferase 2 (GST2) (Manduca sexta (Tobacco hawkmoth)).